The chain runs to 648 residues: Biosynthetic arginine decarboxylase (648 aa).

K109 carries the N6-(pyridoxal phosphate)lysine modification. 291–301 (LDVGGGLGVDY) contributes to the substrate binding site.

Belongs to the Orn/Lys/Arg decarboxylase class-II family. SpeA subfamily. The cofactor is Mg(2+). Pyridoxal 5'-phosphate is required as a cofactor.

It catalyses the reaction L-arginine + H(+) = agmatine + CO2. Its pathway is amine and polyamine biosynthesis; agmatine biosynthesis; agmatine from L-arginine: step 1/1. In terms of biological role, catalyzes the biosynthesis of agmatine from arginine. This Prochlorococcus marinus (strain MIT 9303) protein is Biosynthetic arginine decarboxylase.